The sequence spans 315 residues: Endolytic peptidoglycan transglycosylase RlpA (315 aa).

A signal peptide spans 1–19 (MGLALEKVCFLGVIFLISA). Residue Cys20 is the site of N-palmitoyl cysteine attachment. Cys20 carries S-diacylglycerol cysteine lipidation. Basic and acidic residues predominate over residues 68–79 (SDSQDSNTKDQP). The disordered stretch occupies residues 68 to 92 (SDSQDSNTKDQPLDNGMRDSSSIQR). The region spanning 242–315 (SVSGGKFSLQ…YNQNAVLTRE (74 aa)) is the SPOR domain.

Belongs to the RlpA family.

The protein resides in the cell membrane. Functionally, lytic transglycosylase with a strong preference for naked glycan strands that lack stem peptides. This chain is Endolytic peptidoglycan transglycosylase RlpA, found in Helicobacter pylori (strain ATCC 700392 / 26695) (Campylobacter pylori).